The following is a 307-amino-acid chain: Methionyl-tRNA formyltransferase (307 aa).

109-112 (SMLP) is a (6S)-5,6,7,8-tetrahydrofolate binding site.

Belongs to the Fmt family.

The catalysed reaction is L-methionyl-tRNA(fMet) + (6R)-10-formyltetrahydrofolate = N-formyl-L-methionyl-tRNA(fMet) + (6S)-5,6,7,8-tetrahydrofolate + H(+). Attaches a formyl group to the free amino group of methionyl-tRNA(fMet). The formyl group appears to play a dual role in the initiator identity of N-formylmethionyl-tRNA by promoting its recognition by IF2 and preventing the misappropriation of this tRNA by the elongation apparatus. The sequence is that of Methionyl-tRNA formyltransferase from Orientia tsutsugamushi (strain Boryong) (Rickettsia tsutsugamushi).